Consider the following 2883-residue polypeptide: Bifunctional DNA-directed RNA polymerase subunit beta-beta' (2883 aa).

The interval 1 to 1377 (MPTTLKSGNR…DVTVYGETEE (1377 aa)) is DNA-directed RNA polymerase subunit beta. Positions 1382–2883 (PMPIKEDDRP…IRIKEKTEGA (1502 aa)) are DNA-directed RNA polymerase subunit beta'. Zn(2+)-binding residues include Cys1447, Cys1449, Cys1462, and Cys1465. Residues Asp1846, Asp1848, and Asp1850 each contribute to the Mg(2+) site. Residues Cys2176, Cys2250, Cys2257, and Cys2260 each contribute to the Zn(2+) site.

In the N-terminal section; belongs to the RNA polymerase beta chain family. The protein in the C-terminal section; belongs to the RNA polymerase beta' chain family. The RNAP catalytic core consists of 2 alpha, 1 beta/beta' and 1 omega subunit. When a sigma factor is associated with the core the holoenzyme is formed, which can initiate transcription. The cofactor is Mg(2+). Zn(2+) serves as cofactor.

It carries out the reaction RNA(n) + a ribonucleoside 5'-triphosphate = RNA(n+1) + diphosphate. DNA-dependent RNA polymerase catalyzes the transcription of DNA into RNA using the four ribonucleoside triphosphates as substrates. The sequence is that of Bifunctional DNA-directed RNA polymerase subunit beta-beta' (rpoBC) from Wolinella succinogenes (strain ATCC 29543 / DSM 1740 / CCUG 13145 / JCM 31913 / LMG 7466 / NCTC 11488 / FDC 602W) (Vibrio succinogenes).